The following is a 206-amino-acid chain: dITP/XTP pyrophosphatase (206 aa).

Serine 10–lysine 15 serves as a coordination point for substrate. The Mg(2+) site is built by glutamate 40 and aspartate 69. Aspartate 69 acts as the Proton acceptor in catalysis. Substrate-binding positions include serine 70, phenylalanine 148–aspartate 151, lysine 171, and histidine 176–arginine 177.

The protein belongs to the HAM1 NTPase family. In terms of assembly, homodimer. Requires Mg(2+) as cofactor.

It catalyses the reaction XTP + H2O = XMP + diphosphate + H(+). The enzyme catalyses dITP + H2O = dIMP + diphosphate + H(+). The catalysed reaction is ITP + H2O = IMP + diphosphate + H(+). Functionally, pyrophosphatase that catalyzes the hydrolysis of nucleoside triphosphates to their monophosphate derivatives, with a high preference for the non-canonical purine nucleotides XTP (xanthosine triphosphate), dITP (deoxyinosine triphosphate) and ITP. Seems to function as a house-cleaning enzyme that removes non-canonical purine nucleotides from the nucleotide pool, thus preventing their incorporation into DNA/RNA and avoiding chromosomal lesions. The chain is dITP/XTP pyrophosphatase from Synechococcus sp. (strain CC9311).